Reading from the N-terminus, the 250-residue chain is Hydroxyacylglutathione hydrolase (250 aa).

Residues histidine 52, histidine 54, aspartate 56, histidine 57, histidine 107, aspartate 128, and histidine 166 each coordinate Zn(2+).

Belongs to the metallo-beta-lactamase superfamily. Glyoxalase II family. Monomer. It depends on Zn(2+) as a cofactor.

It catalyses the reaction an S-(2-hydroxyacyl)glutathione + H2O = a 2-hydroxy carboxylate + glutathione + H(+). It functions in the pathway secondary metabolite metabolism; methylglyoxal degradation; (R)-lactate from methylglyoxal: step 2/2. In terms of biological role, thiolesterase that catalyzes the hydrolysis of S-D-lactoyl-glutathione to form glutathione and D-lactic acid. The protein is Hydroxyacylglutathione hydrolase of Neisseria meningitidis serogroup A / serotype 4A (strain DSM 15465 / Z2491).